Reading from the N-terminus, the 106-residue chain is Urease subunit beta (106 aa).

It belongs to the urease beta subunit family. As to quaternary structure, heterotrimer of UreA (gamma), UreB (beta) and UreC (alpha) subunits. Three heterotrimers associate to form the active enzyme.

It is found in the cytoplasm. It carries out the reaction urea + 2 H2O + H(+) = hydrogencarbonate + 2 NH4(+). The protein operates within nitrogen metabolism; urea degradation; CO(2) and NH(3) from urea (urease route): step 1/1. The polypeptide is Urease subunit beta (Synechococcus sp. (strain WH7805)).